The sequence spans 1372 residues: DNA-directed RNA polymerase subunit beta (1372 aa).

This sequence belongs to the RNA polymerase beta chain family. As to quaternary structure, the RNAP catalytic core consists of 2 alpha, 1 beta, 1 beta' and 1 omega subunit. When a sigma factor is associated with the core the holoenzyme is formed, which can initiate transcription.

It carries out the reaction RNA(n) + a ribonucleoside 5'-triphosphate = RNA(n+1) + diphosphate. In terms of biological role, DNA-dependent RNA polymerase catalyzes the transcription of DNA into RNA using the four ribonucleoside triphosphates as substrates. The sequence is that of DNA-directed RNA polymerase subunit beta from Nitratidesulfovibrio vulgaris (strain DSM 19637 / Miyazaki F) (Desulfovibrio vulgaris).